The chain runs to 295 residues: Bifunctional protein FolD 1 (295 aa).

NADP(+) contacts are provided by residues 165-167 (GKS), Ile190, and Ile231.

This sequence belongs to the tetrahydrofolate dehydrogenase/cyclohydrolase family. As to quaternary structure, homodimer.

It carries out the reaction (6R)-5,10-methylene-5,6,7,8-tetrahydrofolate + NADP(+) = (6R)-5,10-methenyltetrahydrofolate + NADPH. The catalysed reaction is (6R)-5,10-methenyltetrahydrofolate + H2O = (6R)-10-formyltetrahydrofolate + H(+). It participates in one-carbon metabolism; tetrahydrofolate interconversion. Its function is as follows. Catalyzes the oxidation of 5,10-methylenetetrahydrofolate to 5,10-methenyltetrahydrofolate and then the hydrolysis of 5,10-methenyltetrahydrofolate to 10-formyltetrahydrofolate. The protein is Bifunctional protein FolD 1 of Rhizorhabdus wittichii (strain DSM 6014 / CCUG 31198 / JCM 15750 / NBRC 105917 / EY 4224 / RW1) (Sphingomonas wittichii).